We begin with the raw amino-acid sequence, 79 residues long: Acyl carrier protein (79 aa).

The 76-residue stretch at 2–77 (SSIEDRVKKI…QAVDYIKKHL (76 aa)) folds into the Carrier domain. The residue at position 37 (S37) is an O-(pantetheine 4'-phosphoryl)serine.

The protein belongs to the acyl carrier protein (ACP) family. In terms of processing, 4'-phosphopantetheine is transferred from CoA to a specific serine of apo-ACP by AcpS. This modification is essential for activity because fatty acids are bound in thioester linkage to the sulfhydryl of the prosthetic group.

The protein localises to the cytoplasm. It functions in the pathway lipid metabolism; fatty acid biosynthesis. In terms of biological role, carrier of the growing fatty acid chain in fatty acid biosynthesis. This chain is Acyl carrier protein, found in Halorhodospira halophila (strain DSM 244 / SL1) (Ectothiorhodospira halophila (strain DSM 244 / SL1)).